Here is a 529-residue protein sequence, read N- to C-terminus: Peptide chain release factor 3 (529 aa).

Residues 10-278 enclose the tr-type G domain; the sequence is ARRRTFAIIS…NFVDLAPAPR (269 aa). Residues 19-26, 87-91, and 141-144 each bind GTP; these read SHPDAGKT, DTPGH, and NKLD.

The protein belongs to the TRAFAC class translation factor GTPase superfamily. Classic translation factor GTPase family. PrfC subfamily.

The protein resides in the cytoplasm. Functionally, increases the formation of ribosomal termination complexes and stimulates activities of RF-1 and RF-2. It binds guanine nucleotides and has strong preference for UGA stop codons. It may interact directly with the ribosome. The stimulation of RF-1 and RF-2 is significantly reduced by GTP and GDP, but not by GMP. The polypeptide is Peptide chain release factor 3 (Nitratidesulfovibrio vulgaris (strain ATCC 29579 / DSM 644 / CCUG 34227 / NCIMB 8303 / VKM B-1760 / Hildenborough) (Desulfovibrio vulgaris)).